The following is a 266-amino-acid chain: MPKRETQSLHDTQQQPGPTAPQRDSLFAAPIAKLGDWTFDEKVAEVFPDMISRSVPGYSNIISMIGMLAERFVQPNSQIYDLGCSLGAATLSMRRNIKVEGCKIIAVDNSPAMIERCRRHIDAFRAETPVDVVESDILDIQLENASMVVLNFTLQFLEPADRQRLLNQVYQGLRPGGALVLSEKFNFEDNDVGELLFNMHHDFKRANGYSELEISQKRSMLENVMLTDSVETHKKRLHQAGFEHAEVWFQCFNFGSLIALKAGEAQ.

The disordered stretch occupies residues 1-24 (MPKRETQSLHDTQQQPGPTAPQRD). Residues Tyr-58, 83-85 (GCS), 108-109 (DN), 136-137 (DI), Asn-151, and Arg-218 contribute to the S-adenosyl-L-methionine site.

This sequence belongs to the class I-like SAM-binding methyltransferase superfamily. Cx-SAM synthase family. Homodimer.

It carries out the reaction prephenate + S-adenosyl-L-methionine = carboxy-S-adenosyl-L-methionine + 3-phenylpyruvate + H2O. Catalyzes the conversion of S-adenosyl-L-methionine (SAM) to carboxy-S-adenosyl-L-methionine (Cx-SAM). The chain is Carboxy-S-adenosyl-L-methionine synthase from Yersinia enterocolitica serotype O:8 / biotype 1B (strain NCTC 13174 / 8081).